A 2254-amino-acid chain; its full sequence is Genome polyprotein (2254 aa).

Residues 438 to 592 (QTTINELAQL…EQWLVDNPGR (155 aa)) form the SF3 helicase domain. Residue 464–471 (GPPGIGKT) participates in ATP binding. Position 956 is an O-(5'-phospho-RNA)-tyrosine (Tyr-956). Positions 1041-1196 (GDTYDSEGRG…KKLVSRVQTK (156 aa)) constitute a Peptidase C24 domain. Residues His-1078, Asp-1099, and Cys-1163 each act as for 3CLpro activity in the active site. The RdRp catalytic domain maps to 1434–1559 (RVLYCLDYSK…GLTPATASIM (126 aa)). Residues 1714 to 1742 (PAPTRSVASNPEGTQNSNESRPVQPAGPM) are disordered. Polar residues predominate over residues 1719 to 1734 (SVASNPEGTQNSNESR).

As to quaternary structure, homodimer. Homomultimer. Interacts with host IEF4E; this interaction plays a role in translation of viral proteins. Specific enzymatic cleavages in vivo yield mature proteins. Pro-Pol is first autocatalytically cleaved, then processes the whole polyprotein. In terms of processing, VPg is uridylylated by the polymerase and is covalently attached to the 5'-end of the polyadenylated genomic and subgenomic RNAs. This uridylylated form acts as a nucleotide-peptide primer for the polymerase.

Its subcellular location is the virion. It is found in the host cytoplasm. The enzyme catalyses a ribonucleoside 5'-triphosphate + H2O = a ribonucleoside 5'-diphosphate + phosphate + H(+). It catalyses the reaction RNA(n) + a ribonucleoside 5'-triphosphate = RNA(n+1) + diphosphate. It carries out the reaction Endopeptidase with a preference for cleavage when the P1 position is occupied by Glu-|-Xaa and the P1' position is occupied by Gly-|-Yaa.. In terms of biological role, together with NTPase and NS4, initiates the formation of the replication complex. Induces the proliferation of the host smooth ER membranes forming long tubular structures. These remodeled membranes probably form the viral factories that contain the replication complex. Its function is as follows. Displays NTPase activity, but no helicase activity. Induces the formation of convoluted membranes derived from the host ER. These remodeled membranes probably form the viral factories that contain the replication complex. Together with NS2 and NS4, initiates the formation of the replication complex. Probable key protein responsible for the formation of membrane alterations by the virus. Induces the formation of convoluted membranes derived from the host ER. These remodeled membranes probably form the viral factories that contain the replication complex. Together with NS2 and NTPase, initiates the formation of the replication complex. Functionally, viral genome-linked protein is covalently linked to the 5'-end of the positive-strand, negative-strand genomic RNAs and subgenomic RNA. Acts as a genome-linked replication primer. May recruit ribosome to viral RNA thereby promoting viral proteins translation. Interacts with host translation initiation complex to allow the translation of viral proteins. In terms of biological role, protease-polymerase p76 processes the polyprotein: Pro-Pol is first released by autocleavage, then all other proteins are cleaved. Cleaves host translation initiation factor eIF4G1, eIF4G2 and PABP1 thereby inducing a shutdown of host protein synthesis. This shutdown may not prevent viral mRNA from being translated since viral Vpg replaces the cap. It is also an RNA-directed RNA polymerase which replicates genomic and antigenomic viral RNA by recognizing specific signals. Also transcribes a subgenomic mRNA by initiating RNA synthesis internally on antigenomic RNA. This sgRNA codes for structural proteins. Catalyzes the covalent attachment VPg with viral RNAs. Its function is as follows. Capsid protein self assembles to form an icosahedral capsid with a T=3 symmetry, about 38 nm in diameter, and consisting of 180 capsid proteins. The capsid encapsulate the genomic RNA and VP2 proteins. Attaches virion to target cells, inducing endocytosis of the viral particle. Acidification of the endosome induces conformational change of capsid protein thereby injecting virus genomic RNA into host cytoplasm. The protein is Genome polyprotein of Porcine enteric sapovirus (isolate Swine/United States/Cowden/1980) (Sw/SV/Cowden/1980/US).